We begin with the raw amino-acid sequence, 494 residues long: MTITFQDFNLSSDLMKAINRMGFEEATPIQAQTIPLGLSNKDVIGQAQTGTGKTAAFGIPLVEKINPESPNIQAIVIAPTRELAIQVSEELYKIGQDKRAKVLPIYGGQDIGRQIRALKKNPNIIVGTPGRLLDHINRRTIRLNNVNTVVMDEADEMLNMGFIDDIESILSNVPSEHQTLLFSATMPAPIKRIAERFMTEPEHVKVKAKEMTVSNIQQFYLEVQERKKFDTLTRLLDIQSPELAIVFGRTKRRVDELAEALNLRGYAAEGIHGDLTQAKRMVALRKFKEGAIEVLVATDVAARGLDISGVTHVYNFDVPQDPESYVHRIGRTGRAGKTGMAMTFITPREKSMLRAIEQTTKRKMDRMKEPTLDEALEGQQQVTVERLRTTISENNLNFYMTAAAELLEDHDAVTVVAAAIKMATKEPDDTPVRLTDEAPMVSKRYKNQRSSKRRDGQGGGYRGGKGKSNNRSSYDKKRSNDRRSSGDRRQKKSY.

The Q motif motif lies at 3–31 (ITFQDFNLSSDLMKAINRMGFEEATPIQA). Residues 34-204 (IPLGLSNKDV…ERFMTEPEHV (171 aa)) enclose the Helicase ATP-binding domain. Residue 47-54 (AQTGTGKT) coordinates ATP. A DEAD box motif is present at residues 152-155 (DEAD). Residues 215–375 (NIQQFYLEVQ…RMKEPTLDEA (161 aa)) enclose the Helicase C-terminal domain. The required for dimerization or oligomerization stretch occupies residues 413–494 (VTVVAAAIKM…SGDRRQKKSY (82 aa)). Residues 429–494 (DTPVRLTDEA…SGDRRQKKSY (66 aa)) are disordered. Residues 443-452 (KRYKNQRSSK) show a composition bias toward basic residues. Positions 473 to 488 (SYDKKRSNDRRSSGDR) are enriched in basic and acidic residues.

Belongs to the DEAD box helicase family. CshA subfamily. Homodimer or oligomer. May interact with RNA helicases CshB and DbpA (DeaD). Probably a component of the RNA degradosome complex composed of rny, rnjA, rnjB, pnp, pfkA and eno, and possibly also rnpA (although rnjA and rnjB's presence is unclear). Interacts with ribosomal proteins L1 and L3 (rplA and rplC) and the protein component of RNase RnpA. Interacts with the RNA polymerase core. The cofactor is Mg(2+).

The protein resides in the cytoplasm. It is found in the nucleoid. Its subcellular location is the cell membrane. It carries out the reaction ATP + H2O = ADP + phosphate + H(+). With respect to regulation, RNA helicase activity is inhibited by EDTA. Functionally, the most abundant DEAD-box RNA helicase. An ATP-dependent RNA helicase with RNA-dependent ATPase activity. May work in conjunction with the cold shock proteins to ensure proper initiation of transcription at low and optimal temperatures. In vitro, unwinds dsRNA in both 5'- and 3'- directions. Plays a role in ribosomal 50S subunit assembly. Its deletion leads to changes in mRNA levels for over 200 transcripts. The sequence is that of DEAD-box ATP-dependent RNA helicase CshA from Bacillus subtilis (strain 168).